Reading from the N-terminus, the 94-residue chain is Pyrimidine/purine nucleoside phosphorylase (94 aa).

It belongs to the nucleoside phosphorylase PpnP family.

It carries out the reaction a purine D-ribonucleoside + phosphate = a purine nucleobase + alpha-D-ribose 1-phosphate. The catalysed reaction is adenosine + phosphate = alpha-D-ribose 1-phosphate + adenine. The enzyme catalyses cytidine + phosphate = cytosine + alpha-D-ribose 1-phosphate. It catalyses the reaction guanosine + phosphate = alpha-D-ribose 1-phosphate + guanine. It carries out the reaction inosine + phosphate = alpha-D-ribose 1-phosphate + hypoxanthine. The catalysed reaction is thymidine + phosphate = 2-deoxy-alpha-D-ribose 1-phosphate + thymine. The enzyme catalyses uridine + phosphate = alpha-D-ribose 1-phosphate + uracil. It catalyses the reaction xanthosine + phosphate = alpha-D-ribose 1-phosphate + xanthine. Functionally, catalyzes the phosphorolysis of diverse nucleosides, yielding D-ribose 1-phosphate and the respective free bases. Can use uridine, adenosine, guanosine, cytidine, thymidine, inosine and xanthosine as substrates. Also catalyzes the reverse reactions. In Psychromonas ingrahamii (strain DSM 17664 / CCUG 51855 / 37), this protein is Pyrimidine/purine nucleoside phosphorylase.